The sequence spans 442 residues: GTPase HflX (442 aa).

Residues 186-362 form the Hflx-type G domain; that stretch reads VLVALAGYTN…ALNRVVLKLP (177 aa). GTP-binding positions include 192–199, 217–221, 238–241, 306–309, and 341–343; these read GYTNAGKS, FTTLD, DTVG, NKID, and SAR. Residues serine 199 and threonine 219 each coordinate Mg(2+).

This sequence belongs to the TRAFAC class OBG-HflX-like GTPase superfamily. HflX GTPase family. In terms of assembly, monomer. Associates with the 50S ribosomal subunit. Requires Mg(2+) as cofactor.

It is found in the cytoplasm. GTPase that associates with the 50S ribosomal subunit and may have a role during protein synthesis or ribosome biogenesis. In Thermococcus kodakarensis (strain ATCC BAA-918 / JCM 12380 / KOD1) (Pyrococcus kodakaraensis (strain KOD1)), this protein is GTPase HflX.